We begin with the raw amino-acid sequence, 221 residues long: Octanoyltransferase (221 aa).

A BPL/LPL catalytic domain is found at 31-216; the sequence is GQIGDTLLLL…SLCAIFDLRP (186 aa). Residues 76 to 83, 145 to 147, and 159 to 161 each bind substrate; these read RGGEVTYH, AIG, and GLA. Catalysis depends on C177, which acts as the Acyl-thioester intermediate.

Belongs to the LipB family.

It is found in the cytoplasm. The catalysed reaction is octanoyl-[ACP] + L-lysyl-[protein] = N(6)-octanoyl-L-lysyl-[protein] + holo-[ACP] + H(+). It participates in protein modification; protein lipoylation via endogenous pathway; protein N(6)-(lipoyl)lysine from octanoyl-[acyl-carrier-protein]: step 1/2. Functionally, catalyzes the transfer of endogenously produced octanoic acid from octanoyl-acyl-carrier-protein onto the lipoyl domains of lipoate-dependent enzymes. Lipoyl-ACP can also act as a substrate although octanoyl-ACP is likely to be the physiological substrate. The polypeptide is Octanoyltransferase (Chloroflexus aggregans (strain MD-66 / DSM 9485)).